Reading from the N-terminus, the 621-residue chain is MTAERGPRSPGTGQKLRLRATEPMPQWTAKNLHALLDLPAAMELRQIELIYRAEGNANLVLALPQFKKVLRLPKMISSRLRQAAHQRHELADEVARPEGQRVSSERAGTENAGDLTMPDFMAYIGIMRRLLGNEFVCGADIVAIPKEDDRFWINEHIRAQRPVSRLDKEFVGPFGLLLPDVTQLPATFDVLLANLQAKGTTGDESGAAAGVGDGGGVGRGAGTRTKNRSAVRRLGDTYAIEIKPKQGWLQLASDVNDLFDLMPSGAVTKPKETTCNQEENEPSARDKCWCRFCSMQLLKMHNGKIKRLGHYCPLDLFSGTPSRMLDALDALLACPQNNLRVFQNSNLIYGDHANSISFDELSSRVFPGEIMVLIKHLLVACLLREYEHPESKRAEGSNQSQKQQQEQPEPEQLNQSRVSIAATETKAGAAGIGAANVVLPLGGRAAAPVVTAGQSSTRTRAAAATATTQRYTKVARVETTITRQAATSMAAGPASSSQLSGNVLATATATATATAMATSGRTETKTEPETPAEAASTTSRNVNQNESQKLNRNEPANQTQAQNNKTEIFRLPKNCVLQKILNLQLLVKVSQPIKLLPKLLSLCPFGFVYSACPPENLGNCR.

3 disordered regions span residues 1-20, 87-111, and 201-226; these read MTAE…RLRA, RHEL…GTEN, and TGDE…TRTK. Basic and acidic residues predominate over residues 87–108; that stretch reads RHELADEVARPEGQRVSSERAG. Gly residues predominate over residues 209–221; that stretch reads AGVGDGGGVGRGA. Positions 241-245 match the EXKPK motif motif; the sequence is EIKPK. 2 disordered regions span residues 391 to 416 and 514 to 565; these read SKRA…LNQS and TAMA…QNNK. Low complexity-rich tracts occupy residues 397 to 416 and 529 to 539; these read SNQS…LNQS and ETPAEAASTTS. Over residues 540-565 the composition is skewed to polar residues; it reads RNVNQNESQKLNRNEPANQTQAQNNK.

This sequence belongs to the IPK1 type 2 family.

The enzyme catalyses 1D-myo-inositol 1,3,4,5,6-pentakisphosphate + ATP = 1D-myo-inositol hexakisphosphate + ADP + H(+). Functionally, contributes to the formation of Ins(1,2,3,4,5,6)P6 (InsP6, IP6 or phytate). Phosphorylates Ins(1,3,4,5,6)P5 at position 2 to form InsP6. Together with Ipk2, they are the main contributors to higher InsP synthesis. The chain is Inositol-pentakisphosphate 2-kinase (Ipk1) from Drosophila melanogaster (Fruit fly).